The sequence spans 541 residues: Ankyrin repeat domain-containing protein 13C (541 aa).

Residues 1–20 show a composition bias toward basic and acidic residues; the sequence is MTGEKIRSLRRDHKPSKEDG. The disordered stretch occupies residues 1–53; sequence MTGEKIRSLRRDHKPSKEDGDVLEPCEEEATAALGGAFTGGRSGPGGSGKGGK. The segment covering 21–30 has biased composition (acidic residues); that stretch reads DVLEPCEEEA. Residues 37-52 are compositionally biased toward gly residues; the sequence is AFTGGRSGPGGSGKGG. ANK repeat units follow at residues 111 to 142, 143 to 172, and 176 to 205; these read PSLYPVHECVFKGDVRRLSSLIRTHNIGQKDN, HGNTPLHLAVMLGNKECAHLLLAHNAPVKV, and QGWSPLAEAISYGDRQMITALLRKLKQQSR. Ser411 is subject to Phosphoserine.

It localises to the endoplasmic reticulum membrane. In terms of biological role, acts as a molecular chaperone for G protein-coupled receptors, regulating their biogenesis and exit from the ER. In Mus musculus (Mouse), this protein is Ankyrin repeat domain-containing protein 13C (Ankrd13c).